Reading from the N-terminus, the 452-residue chain is Chaperone SurA (452 aa).

The signal sequence occupies residues 1-28 (MKKTLRFAAVVSSLAASAALLVAAPAAA). PpiC domains follow at residues 186–288 (QQDL…RLVD) and 302–400 (IVQT…QVLN).

It is found in the periplasm. The catalysed reaction is [protein]-peptidylproline (omega=180) = [protein]-peptidylproline (omega=0). In terms of biological role, chaperone involved in the correct folding and assembly of outer membrane proteins. Recognizes specific patterns of aromatic residues and the orientation of their side chains, which are found more frequently in integral outer membrane proteins. May act in both early periplasmic and late outer membrane-associated steps of protein maturation. In Burkholderia orbicola (strain AU 1054), this protein is Chaperone SurA.